Reading from the N-terminus, the 553-residue chain is uncharacterized protein (553 aa).

Residues 26 to 109 form the SWIB/MDM2 domain; that stretch reads RFEFVGWGSR…YDLLEKHYKE (84 aa). Residues 150–275 enclose the Plus3 domain; the sequence is AIVSDNIKLL…KAKKLHKDQT (126 aa). 2 disordered regions span residues 335-357 and 447-482; these read QNPE…SESP and PVNN…ETLD. Positions 343–353 are enriched in basic and acidic residues; the sequence is EAHKSDNEQRL. A compositionally biased stretch (polar residues) spans 447 to 461; that stretch reads PVNNVDNGSQVQPNP. The span at 466-480 shows a compositional bias: acidic residues; sequence ELSDDDEDDNGDGET. A GYF domain is found at 497-551; sequence KLNWLYKDPQGLVQGPFSLTQLKAWSDAEYFTKQFRVWMTGESMESAVLLTDVLR.

This is an uncharacterized protein from Arabidopsis thaliana (Mouse-ear cress).